A 209-amino-acid chain; its full sequence is MTGKKRSASSSRWLQEHFSDKYVQQAQKKGLRSRAWFKLDEIQQSDKLFKPGMTVVDLGAAPGGWSQYVVTQIGGKGRIIACDLLPMDPIVGVDFLQGDFRDELVMKALLERVGDSKVQVVMSDMAPNMSGTPAVDIPRAMYLVELALEMCRDVLAPGGSFVVKVFQGEGFDEYLREIRSLFTKVKVRKPDSSRARSREVYIVATGRKP.

The S-adenosyl-L-methionine site is built by Gly-63, Trp-65, Asp-83, Asp-99, and Asp-124. Lys-164 serves as the catalytic Proton acceptor.

This sequence belongs to the class I-like SAM-binding methyltransferase superfamily. RNA methyltransferase RlmE family.

The protein localises to the cytoplasm. The enzyme catalyses uridine(2552) in 23S rRNA + S-adenosyl-L-methionine = 2'-O-methyluridine(2552) in 23S rRNA + S-adenosyl-L-homocysteine + H(+). Specifically methylates the uridine in position 2552 of 23S rRNA at the 2'-O position of the ribose in the fully assembled 50S ribosomal subunit. The sequence is that of Ribosomal RNA large subunit methyltransferase E from Escherichia coli O81 (strain ED1a).